The chain runs to 439 residues: GTPase Der (439 aa).

2 consecutive EngA-type G domains span residues 4-169 and 177-352; these read AMVA…PEND and IKIA…EEYN. Residues 10–17, 57–61, 120–123, 183–190, 230–234, and 295–298 each bind GTP; these read GRPNVGKS, DTGGL, NKVD, DTAGI, and NKWD. The KH-like domain maps to 353 to 437; it reads KRITTGLLNN…PIVISTKKRG (85 aa).

It belongs to the TRAFAC class TrmE-Era-EngA-EngB-Septin-like GTPase superfamily. EngA (Der) GTPase family. In terms of assembly, associates with the 50S ribosomal subunit.

Its function is as follows. GTPase that plays an essential role in the late steps of ribosome biogenesis. This chain is GTPase Der, found in Caldanaerobacter subterraneus subsp. tengcongensis (strain DSM 15242 / JCM 11007 / NBRC 100824 / MB4) (Thermoanaerobacter tengcongensis).